We begin with the raw amino-acid sequence, 301 residues long: Acetylglutamate kinase (301 aa).

Residues 68 to 69, arginine 90, and asparagine 195 each bind substrate; that span reads GG.

It belongs to the acetylglutamate kinase family. ArgB subfamily.

The protein resides in the cytoplasm. It catalyses the reaction N-acetyl-L-glutamate + ATP = N-acetyl-L-glutamyl 5-phosphate + ADP. It participates in amino-acid biosynthesis; L-arginine biosynthesis; N(2)-acetyl-L-ornithine from L-glutamate: step 2/4. Functionally, catalyzes the ATP-dependent phosphorylation of N-acetyl-L-glutamate. The protein is Acetylglutamate kinase of Pseudomonas putida (strain ATCC 700007 / DSM 6899 / JCM 31910 / BCRC 17059 / LMG 24140 / F1).